Reading from the N-terminus, the 113-residue chain is Teretoxin Tan14.1 (113 aa).

A signal peptide spans 1–21 (MALEAQMTLRMFVLVAMASTV). The propeptide occupies 22–86 (HVLSSSFSED…DETSSRTGKR (65 aa)).

Belongs to the teretoxin N (TN) superfamily. In terms of processing, contains 2 disulfide bonds. Expressed by the venom duct.

Its subcellular location is the secreted. The chain is Teretoxin Tan14.1 from Terebra anilis (Auger snail).